The chain runs to 338 residues: UDP-glucose 4-epimerase (338 aa).

Residues tyrosine 11 to isoleucine 12, aspartate 31 to serine 36, aspartate 58 to isoleucine 59, phenylalanine 80 to lysine 84, asparagine 99, serine 124, tyrosine 149, lysine 153, and phenylalanine 178 each bind NAD(+). The substrate site is built by serine 124 and tyrosine 149. Tyrosine 149 serves as the catalytic Proton acceptor. Residues asparagine 179, asparagine 199–leucine 200, alanine 216–phenylalanine 218, arginine 231, arginine 292–aspartate 295, and tyrosine 299 contribute to the substrate site.

This sequence belongs to the NAD(P)-dependent epimerase/dehydratase family. As to quaternary structure, homodimer. NAD(+) is required as a cofactor.

The catalysed reaction is UDP-alpha-D-glucose = UDP-alpha-D-galactose. It participates in carbohydrate metabolism; galactose metabolism. Functionally, involved in the metabolism of galactose. Catalyzes the conversion of UDP-galactose (UDP-Gal) to UDP-glucose (UDP-Glc) through a mechanism involving the transient reduction of NAD. This is UDP-glucose 4-epimerase (galE) from Salmonella typhimurium (strain LT2 / SGSC1412 / ATCC 700720).